The following is a 130-amino-acid chain: MYGGICICVLLAALSVSSLGQQPAGSHDGSPVAAELQQSLTEPHRHSRAPSSAGPLKPAPRLDGSFEQRATIGALLAKYLQQARKGSTGRFSVLGNRVQSIDPTHRINDRDYMGWMDFGRRSAEEYEYSS.

An N-terminal signal peptide occupies residues 1-20; that stretch reads MYGGICICVLLAALSVSSLG. Residues 21-48 constitute a propeptide that is removed on maturation; it reads QQPAGSHDGSPVAAELQQSLTEPHRHSR. The segment at 21-63 is disordered; that stretch reads QQPAGSHDGSPVAAELQQSLTEPHRHSRAPSSAGPLKPAPRLD. Y112 carries the post-translational modification Sulfotyrosine. A Phenylalanine amide modification is found at F118. Positions 122–130 are excised as a propeptide; sequence SAEEYEYSS. Residues Y126 and Y128 each carry the sulfotyrosine modification.

Belongs to the gastrin/cholecystokinin family. The precursor is cleaved by proteases to produce a number of active cholecystokinins. In terms of tissue distribution, in the small intestine, the major production site is around the vitelline diverticulum.

It is found in the secreted. This peptide hormone induces gall bladder contraction and the release of pancreatic enzymes in the gut. Its function in the brain is not clear. It also decreases food intake and regulates gastrointestinal physiological processes. The polypeptide is Cholecystokinin (CCK) (Gallus gallus (Chicken)).